The following is a 231-amino-acid chain: MAKISKRMKEISAKIDAEKKYPVSEAFDILRDVSSVKFVESVDVSVALGVDPRKSDQVVRGASVLPNGTGKTVRVAVFAKGPAADAAKEAGADVVGMEDLADEVKKGNMDFDVVIASPDSMRVVGQLGQILGPKGLMPNPKVGTVTMDVAKAVRDAKAGQVRYRVDKAGIIHTTIGKVNFTSDALKQNLEQLLTDLKKAKPSVSKGIYLKKVSVSSTMGPGISVDFSDLNI.

It belongs to the universal ribosomal protein uL1 family. In terms of assembly, part of the 50S ribosomal subunit.

In terms of biological role, binds directly to 23S rRNA. The L1 stalk is quite mobile in the ribosome, and is involved in E site tRNA release. Its function is as follows. Protein L1 is also a translational repressor protein, it controls the translation of the L11 operon by binding to its mRNA. This Francisella philomiragia subsp. philomiragia (strain ATCC 25017 / CCUG 19701 / FSC 153 / O#319-036) protein is Large ribosomal subunit protein uL1.